A 183-amino-acid chain; its full sequence is Potassium-transporting ATPase KdpC subunit (183 aa).

The helical transmembrane segment at 11 to 31 (LALLMTLLTGVLYPLAVTGVA) threads the bilayer.

The protein belongs to the KdpC family. The system is composed of three essential subunits: KdpA, KdpB and KdpC.

It localises to the cell inner membrane. Functionally, part of the high-affinity ATP-driven potassium transport (or Kdp) system, which catalyzes the hydrolysis of ATP coupled with the electrogenic transport of potassium into the cytoplasm. This subunit acts as a catalytic chaperone that increases the ATP-binding affinity of the ATP-hydrolyzing subunit KdpB by the formation of a transient KdpB/KdpC/ATP ternary complex. This is Potassium-transporting ATPase KdpC subunit from Pseudomonas putida (strain GB-1).